Consider the following 98-residue polypeptide: Integration host factor subunit beta (98 aa).

This sequence belongs to the bacterial histone-like protein family. As to quaternary structure, heterodimer of an alpha and a beta chain.

This protein is one of the two subunits of integration host factor, a specific DNA-binding protein that functions in genetic recombination as well as in transcriptional and translational control. In Pseudomonas entomophila (strain L48), this protein is Integration host factor subunit beta.